A 464-amino-acid polypeptide reads, in one-letter code: Fumarate hydratase class II (464 aa).

Residues 96 to 98 (SGT), 127 to 130 (HPND), 137 to 139 (SSN), and T185 each bind substrate. The active-site Proton donor/acceptor is H186. S316 is a catalytic residue. Substrate-binding positions include S317 and 322–324 (KVN).

It belongs to the class-II fumarase/aspartase family. Fumarase subfamily. As to quaternary structure, homotetramer.

It is found in the cytoplasm. It catalyses the reaction (S)-malate = fumarate + H2O. The protein operates within carbohydrate metabolism; tricarboxylic acid cycle; (S)-malate from fumarate: step 1/1. In terms of biological role, involved in the TCA cycle. Catalyzes the stereospecific interconversion of fumarate to L-malate. The chain is Fumarate hydratase class II from Pseudomonas syringae pv. tomato (strain ATCC BAA-871 / DC3000).